The primary structure comprises 384 residues: Glucose-1-phosphate adenylyltransferase (384 aa).

Residues Y103, G168, 183-184 (EK), and S194 each bind alpha-D-glucose 1-phosphate.

Belongs to the bacterial/plant glucose-1-phosphate adenylyltransferase family. Homotetramer.

The catalysed reaction is alpha-D-glucose 1-phosphate + ATP + H(+) = ADP-alpha-D-glucose + diphosphate. It functions in the pathway glycan biosynthesis; glycogen biosynthesis. Involved in the biosynthesis of ADP-glucose, a building block required for the elongation reactions to produce glycogen. Catalyzes the reaction between ATP and alpha-D-glucose 1-phosphate (G1P) to produce pyrophosphate and ADP-Glc. This Fusobacterium nucleatum subsp. nucleatum (strain ATCC 25586 / DSM 15643 / BCRC 10681 / CIP 101130 / JCM 8532 / KCTC 2640 / LMG 13131 / VPI 4355) protein is Glucose-1-phosphate adenylyltransferase.